The following is a 407-amino-acid chain: Actinorhodin polyketide putative beta-ketoacyl synthase 2 (407 aa).

The 402-residue stretch at 1–402 (MSVLITGVGV…GFNSAAVLRR (402 aa)) folds into the Ketosynthase family 3 (KS3) domain.

The protein belongs to the thiolase-like superfamily. Beta-ketoacyl-ACP synthases family.

This chain is Actinorhodin polyketide putative beta-ketoacyl synthase 2, found in Streptomyces coelicolor (strain ATCC BAA-471 / A3(2) / M145).